A 507-amino-acid chain; its full sequence is Peroxisomal catalase (507 aa).

Active-site residues include His-65 and Asn-138. Tyr-348 contacts heme. Positions 505–507 (SKI) match the Microbody targeting signal motif.

This sequence belongs to the catalase family. As to quaternary structure, homotetramer. Heme serves as cofactor.

Its subcellular location is the peroxisome matrix. It carries out the reaction 2 H2O2 = O2 + 2 H2O. Catalyzes the degradation of hydrogen peroxide (H(2)O(2)) generated by peroxisomal oxidases to water and oxygen, thereby protecting cells from the toxic effects of hydrogen peroxide. This is Peroxisomal catalase (PXP9) from Pichia angusta (Yeast).